The chain runs to 367 residues: 3-dehydroquinate synthase (367 aa).

Residues 112 to 116, 136 to 137, K149, K158, and 176 to 179 contribute to the NAD(+) site; these read GVIGD, TT, and TLKT. Zn(2+) is bound by residues E191, H256, and H273.

Belongs to the sugar phosphate cyclases superfamily. Dehydroquinate synthase family. It depends on NAD(+) as a cofactor. Co(2+) serves as cofactor. The cofactor is Zn(2+).

Its subcellular location is the cytoplasm. The catalysed reaction is 7-phospho-2-dehydro-3-deoxy-D-arabino-heptonate = 3-dehydroquinate + phosphate. Its pathway is metabolic intermediate biosynthesis; chorismate biosynthesis; chorismate from D-erythrose 4-phosphate and phosphoenolpyruvate: step 2/7. Functionally, catalyzes the conversion of 3-deoxy-D-arabino-heptulosonate 7-phosphate (DAHP) to dehydroquinate (DHQ). This Prochlorococcus marinus (strain SARG / CCMP1375 / SS120) protein is 3-dehydroquinate synthase.